An 800-amino-acid polypeptide reads, in one-letter code: DNA topoisomerase 1 (800 aa).

In terms of domain architecture, Toprim spans 1 to 111 (MKLVIVESPA…VKSDDFFKRV (111 aa)). Residues E7 and D80 each coordinate Mg(2+). Residues 132 to 568 (DNNLVNAQQA…FWNGFNHNIE (437 aa)) form the Topo IA-type catalytic domain. The segment at 166–171 (SAGRVQ) is interaction with DNA. Y304 acts as the O-(5'-phospho-DNA)-tyrosine intermediate in catalysis. A C4-type zinc finger spans residues 600-627 (CPSCKTGELSLKLGKFGAFLACSNYPEC).

It belongs to the type IA topoisomerase family. Monomer. Mg(2+) serves as cofactor.

The catalysed reaction is ATP-independent breakage of single-stranded DNA, followed by passage and rejoining.. In terms of biological role, releases the supercoiling and torsional tension of DNA, which is introduced during the DNA replication and transcription, by transiently cleaving and rejoining one strand of the DNA duplex. Introduces a single-strand break via transesterification at a target site in duplex DNA. The scissile phosphodiester is attacked by the catalytic tyrosine of the enzyme, resulting in the formation of a DNA-(5'-phosphotyrosyl)-enzyme intermediate and the expulsion of a 3'-OH DNA strand. The free DNA strand then undergoes passage around the unbroken strand, thus removing DNA supercoils. Finally, in the religation step, the DNA 3'-OH attacks the covalent intermediate to expel the active-site tyrosine and restore the DNA phosphodiester backbone. The protein is DNA topoisomerase 1 of Rickettsia bellii (strain RML369-C).